The chain runs to 333 residues: Uroporphyrinogen decarboxylase (333 aa).

Substrate contacts are provided by residues 21–25 (RQVGR), aspartate 70, tyrosine 139, serine 194, and histidine 309.

This sequence belongs to the uroporphyrinogen decarboxylase family. As to quaternary structure, homodimer.

It localises to the cytoplasm. It carries out the reaction uroporphyrinogen III + 4 H(+) = coproporphyrinogen III + 4 CO2. It functions in the pathway porphyrin-containing compound metabolism; protoporphyrin-IX biosynthesis; coproporphyrinogen-III from 5-aminolevulinate: step 4/4. Catalyzes the decarboxylation of four acetate groups of uroporphyrinogen-III to yield coproporphyrinogen-III. The polypeptide is Uroporphyrinogen decarboxylase (Chlamydia caviae (strain ATCC VR-813 / DSM 19441 / 03DC25 / GPIC) (Chlamydophila caviae)).